The following is a 243-amino-acid chain: Ubiquinone/menaquinone biosynthesis C-methyltransferase UbiE (243 aa).

Residues T69, D90, and 116 to 117 (DA) each bind S-adenosyl-L-methionine.

Belongs to the class I-like SAM-binding methyltransferase superfamily. MenG/UbiE family.

The catalysed reaction is a 2-demethylmenaquinol + S-adenosyl-L-methionine = a menaquinol + S-adenosyl-L-homocysteine + H(+). The enzyme catalyses a 2-methoxy-6-(all-trans-polyprenyl)benzene-1,4-diol + S-adenosyl-L-methionine = a 5-methoxy-2-methyl-3-(all-trans-polyprenyl)benzene-1,4-diol + S-adenosyl-L-homocysteine + H(+). Its pathway is quinol/quinone metabolism; menaquinone biosynthesis; menaquinol from 1,4-dihydroxy-2-naphthoate: step 2/2. It functions in the pathway cofactor biosynthesis; ubiquinone biosynthesis. Functionally, methyltransferase required for the conversion of demethylmenaquinol (DMKH2) to menaquinol (MKH2) and the conversion of 2-polyprenyl-6-methoxy-1,4-benzoquinol (DDMQH2) to 2-polyprenyl-3-methyl-6-methoxy-1,4-benzoquinol (DMQH2). The polypeptide is Ubiquinone/menaquinone biosynthesis C-methyltransferase UbiE (Burkholderia vietnamiensis (strain G4 / LMG 22486) (Burkholderia cepacia (strain R1808))).